A 235-amino-acid polypeptide reads, in one-letter code: Small ribosomal subunit protein eS6 (235 aa).

The interval 190–212 is disordered; sequence GFHPRERGERRRKSVRGRMIPDP.

The protein belongs to the eukaryotic ribosomal protein eS6 family.

The sequence is that of Small ribosomal subunit protein eS6 from Aeropyrum pernix (strain ATCC 700893 / DSM 11879 / JCM 9820 / NBRC 100138 / K1).